A 213-amino-acid polypeptide reads, in one-letter code: 3-demethoxyubiquinol 3-hydroxylase (213 aa).

Positions 62, 92, 95, 144, 176, and 179 each coordinate Fe cation.

The protein belongs to the COQ7 family. Fe cation serves as cofactor.

The protein resides in the cell membrane. The enzyme catalyses a 5-methoxy-2-methyl-3-(all-trans-polyprenyl)benzene-1,4-diol + AH2 + O2 = a 3-demethylubiquinol + A + H2O. It participates in cofactor biosynthesis; ubiquinone biosynthesis. Catalyzes the hydroxylation of 2-nonaprenyl-3-methyl-6-methoxy-1,4-benzoquinol during ubiquinone biosynthesis. The polypeptide is 3-demethoxyubiquinol 3-hydroxylase (Legionella pneumophila (strain Corby)).